Reading from the N-terminus, the 105-residue chain is Large ribosomal subunit protein uL22 (105 aa).

It belongs to the universal ribosomal protein uL22 family. Part of the 50S ribosomal subunit.

This protein binds specifically to 23S rRNA; its binding is stimulated by other ribosomal proteins, e.g. L4, L17, and L20. It is important during the early stages of 50S assembly. It makes multiple contacts with different domains of the 23S rRNA in the assembled 50S subunit and ribosome. In terms of biological role, the globular domain of the protein is located near the polypeptide exit tunnel on the outside of the subunit, while an extended beta-hairpin is found that lines the wall of the exit tunnel in the center of the 70S ribosome. This chain is Large ribosomal subunit protein uL22, found in Sulfurimonas denitrificans (strain ATCC 33889 / DSM 1251) (Thiomicrospira denitrificans (strain ATCC 33889 / DSM 1251)).